Reading from the N-terminus, the 291-residue chain is 33 kDa chaperonin (291 aa).

Disulfide bonds link cysteine 237–cysteine 239 and cysteine 270–cysteine 273.

Belongs to the HSP33 family. Under oxidizing conditions two disulfide bonds are formed involving the reactive cysteines. Under reducing conditions zinc is bound to the reactive cysteines and the protein is inactive.

The protein localises to the cytoplasm. In terms of biological role, redox regulated molecular chaperone. Protects both thermally unfolding and oxidatively damaged proteins from irreversible aggregation. Plays an important role in the bacterial defense system toward oxidative stress. This Clostridioides difficile (strain 630) (Peptoclostridium difficile) protein is 33 kDa chaperonin.